Consider the following 377-residue polypeptide: Glutamate 5-kinase (377 aa).

Residue Lys20 coordinates ATP. Substrate-binding residues include Ser60, Asp147, and Asn159. Residue 179–180 (TD) coordinates ATP. In terms of domain architecture, PUA spans 285 to 363 (AGRLVIDDGA…DKVYQVLGEA (79 aa)).

Belongs to the glutamate 5-kinase family.

Its subcellular location is the cytoplasm. The enzyme catalyses L-glutamate + ATP = L-glutamyl 5-phosphate + ADP. Its pathway is amino-acid biosynthesis; L-proline biosynthesis; L-glutamate 5-semialdehyde from L-glutamate: step 1/2. Its function is as follows. Catalyzes the transfer of a phosphate group to glutamate to form L-glutamate 5-phosphate. The polypeptide is Glutamate 5-kinase (Acinetobacter baumannii (strain AB307-0294)).